Here is a 1084-residue protein sequence, read N- to C-terminus: Autophagy-related protein 11 (1084 aa).

2 coiled-coil regions span residues 585 to 739 (VQNL…LTES) and 847 to 879 (VIRR…TNDK). Disordered regions lie at residues 925–961 (SMIP…NMNR) and 973–1007 (NIGS…STNA). Composition is skewed to low complexity over residues 940–949 (SNTNNSNPSS) and 973–993 (NIGS…NGNN). Polar residues predominate over residues 994 to 1007 (KPETNIDTTSSTNA).

It belongs to the ATG11 family. Homodimer and potential homooligomers. Interacts with ATG1 kinase and the ATG19 and ATG34 cargo protein transporters. Interacts with ATG9, ATG17 and ATG20.

Its subcellular location is the preautophagosomal structure membrane. The protein localises to the vacuole membrane. Involved in cytoplasm to vacuole transport (Cvt), pexophagy, mitophagy and nucleophagy. Recruits mitochondria for their selective degradation via autophagy (mitophagy) during starvation, through its interaction with ATG32. Works as scaffold proteins that recruit ATG proteins to the pre-autophagosome (PAS), the site of vesicle/autophagosome formation. Required for ATG9 anterograde transport from the mitochondria to the PAS. Also recruits the ATG19-prAPE1 complex to the PAS. Required for the Cvt vesicles completion. This chain is Autophagy-related protein 11, found in Kluyveromyces marxianus (strain DMKU3-1042 / BCC 29191 / NBRC 104275) (Yeast).